The chain runs to 141 residues: Hemoglobin subunit alpha-D (141 aa).

The 141-residue stretch at 1-141 (MLTAEDKKLI…VAAVLAEKYR (141 aa)) folds into the Globin domain. Residues H58 and H87 each contribute to the heme b site.

Heterotetramer of two alpha-D chains and two beta chains. In terms of tissue distribution, red blood cells.

Involved in oxygen transport from the lung to the various peripheral tissues. The protein is Hemoglobin subunit alpha-D (HBAD) of Aythya fuligula (Tufted duck).